The chain runs to 460 residues: uncharacterized protein (460 aa).

The segment at residues 1 to 33 is a signal peptide (tat-type signal); it reads MKESNSRREFLSQSGKMVTAAALFGTSVPLAHA.

Belongs to the metallo-dependent hydrolases superfamily. In terms of processing, exported by the Tat system. The position of the signal peptide cleavage has not been experimentally proven. Can also be exported by the Sec system.

This is an uncharacterized protein from Escherichia coli (strain K12).